The primary structure comprises 555 residues: Glucose-6-phosphate isomerase (555 aa).

The active-site Proton donor is the Glu-353. Active-site residues include His-384 and Lys-516.

Belongs to the GPI family.

The protein resides in the cytoplasm. It catalyses the reaction alpha-D-glucose 6-phosphate = beta-D-fructose 6-phosphate. Its pathway is carbohydrate biosynthesis; gluconeogenesis. It participates in carbohydrate degradation; glycolysis; D-glyceraldehyde 3-phosphate and glycerone phosphate from D-glucose: step 2/4. Functionally, catalyzes the reversible isomerization of glucose-6-phosphate to fructose-6-phosphate. In Methylobacillus flagellatus (strain ATCC 51484 / DSM 6875 / VKM B-1610 / KT), this protein is Glucose-6-phosphate isomerase.